The following is a 361-amino-acid chain: Ribosomal RNA large subunit methyltransferase M (361 aa).

Residues Ser187, 220–223 (CPGG), Asp239, Asp259, and Asp276 contribute to the S-adenosyl-L-methionine site. Lys305 (proton acceptor) is an active-site residue.

Belongs to the class I-like SAM-binding methyltransferase superfamily. RNA methyltransferase RlmE family. RlmM subfamily. In terms of assembly, monomer.

The protein localises to the cytoplasm. The enzyme catalyses cytidine(2498) in 23S rRNA + S-adenosyl-L-methionine = 2'-O-methylcytidine(2498) in 23S rRNA + S-adenosyl-L-homocysteine + H(+). Catalyzes the 2'-O-methylation at nucleotide C2498 in 23S rRNA. The chain is Ribosomal RNA large subunit methyltransferase M from Shewanella baltica (strain OS223).